A 71-amino-acid chain; its full sequence is Exodeoxyribonuclease 7 small subunit (71 aa).

This sequence belongs to the XseB family. Heterooligomer composed of large and small subunits.

The protein localises to the cytoplasm. The catalysed reaction is Exonucleolytic cleavage in either 5'- to 3'- or 3'- to 5'-direction to yield nucleoside 5'-phosphates.. Its function is as follows. Bidirectionally degrades single-stranded DNA into large acid-insoluble oligonucleotides, which are then degraded further into small acid-soluble oligonucleotides. This chain is Exodeoxyribonuclease 7 small subunit, found in Streptococcus suis (strain 98HAH33).